The following is a 434-amino-acid chain: Enolase (434 aa).

Position 163 (Gln163) interacts with (2R)-2-phosphoglycerate. The active-site Proton donor is Glu205. Positions 242, 291, and 318 each coordinate Mg(2+). (2R)-2-phosphoglycerate contacts are provided by Lys343, Arg372, Ser373, and Lys394. Catalysis depends on Lys343, which acts as the Proton acceptor.

This sequence belongs to the enolase family. Mg(2+) is required as a cofactor.

It localises to the cytoplasm. Its subcellular location is the secreted. The protein localises to the cell surface. It carries out the reaction (2R)-2-phosphoglycerate = phosphoenolpyruvate + H2O. Its pathway is carbohydrate degradation; glycolysis; pyruvate from D-glyceraldehyde 3-phosphate: step 4/5. In terms of biological role, catalyzes the reversible conversion of 2-phosphoglycerate (2-PG) into phosphoenolpyruvate (PEP). It is essential for the degradation of carbohydrates via glycolysis. The polypeptide is Enolase (Streptococcus intermedius).